A 163-amino-acid chain; its full sequence is NADH-quinone oxidoreductase subunit B (163 aa).

Residues Cys-32, Cys-33, Cys-98, and Cys-127 each contribute to the [4Fe-4S] cluster site.

This sequence belongs to the complex I 20 kDa subunit family. NDH-1 is composed of 14 different subunits. Subunits NuoB, C, D, E, F, and G constitute the peripheral sector of the complex. [4Fe-4S] cluster is required as a cofactor.

The protein localises to the cell inner membrane. The enzyme catalyses a quinone + NADH + 5 H(+)(in) = a quinol + NAD(+) + 4 H(+)(out). Its function is as follows. NDH-1 shuttles electrons from NADH, via FMN and iron-sulfur (Fe-S) centers, to quinones in the respiratory chain. Couples the redox reaction to proton translocation (for every two electrons transferred, four hydrogen ions are translocated across the cytoplasmic membrane), and thus conserves the redox energy in a proton gradient. The sequence is that of NADH-quinone oxidoreductase subunit B from Pelobacter propionicus (strain DSM 2379 / NBRC 103807 / OttBd1).